A 426-amino-acid chain; its full sequence is Histidine--tRNA ligase (426 aa).

This sequence belongs to the class-II aminoacyl-tRNA synthetase family. In terms of assembly, homodimer.

The protein localises to the cytoplasm. The enzyme catalyses tRNA(His) + L-histidine + ATP = L-histidyl-tRNA(His) + AMP + diphosphate + H(+). This Streptococcus pyogenes serotype M3 (strain ATCC BAA-595 / MGAS315) protein is Histidine--tRNA ligase.